Consider the following 166-residue polypeptide: Endoribonuclease YbeY (166 aa).

Zn(2+) is bound by residues His132, His136, and His142.

The protein belongs to the endoribonuclease YbeY family. Zn(2+) is required as a cofactor.

The protein resides in the cytoplasm. Functionally, single strand-specific metallo-endoribonuclease involved in late-stage 70S ribosome quality control and in maturation of the 3' terminus of the 16S rRNA. This Clostridium botulinum (strain ATCC 19397 / Type A) protein is Endoribonuclease YbeY.